The chain runs to 492 residues: Bifunctional protein GlmU (492 aa).

The tract at residues 1 to 241 (MIPENTGPAA…RWQVEGANDR (241 aa)) is pyrophosphorylase. UDP-N-acetyl-alpha-D-glucosamine is bound by residues 14–17 (LAAG), lysine 28, glutamine 81, 86–87 (GT), 112–114 (YGD), glycine 151, glutamate 166, asparagine 181, and asparagine 239. Residue aspartate 114 coordinates Mg(2+). A Mg(2+)-binding site is contributed by asparagine 239. Positions 242–262 (VQLAALGAELNRRTVEAWMRA) are linker. The tract at residues 263-492 (GVTVVDPSTT…STPASTEEGK (230 aa)) is N-acetyltransferase. UDP-N-acetyl-alpha-D-glucosamine is bound by residues arginine 344 and lysine 362. The active-site Proton acceptor is the histidine 374. Residues tyrosine 377 and asparagine 388 each coordinate UDP-N-acetyl-alpha-D-glucosamine. Residues 397-398 (NY), serine 416, and alanine 434 contribute to the acetyl-CoA site. A disordered region spans residues 460-492 (WVPANRPGSRSAELAQAAINNSSSTPASTEEGK). The segment covering 477–492 (AINNSSSTPASTEEGK) has biased composition (polar residues).

This sequence in the N-terminal section; belongs to the N-acetylglucosamine-1-phosphate uridyltransferase family. In the C-terminal section; belongs to the transferase hexapeptide repeat family. In terms of assembly, homotrimer. Mg(2+) is required as a cofactor.

Its subcellular location is the cytoplasm. It catalyses the reaction alpha-D-glucosamine 1-phosphate + acetyl-CoA = N-acetyl-alpha-D-glucosamine 1-phosphate + CoA + H(+). It carries out the reaction N-acetyl-alpha-D-glucosamine 1-phosphate + UTP + H(+) = UDP-N-acetyl-alpha-D-glucosamine + diphosphate. Its pathway is nucleotide-sugar biosynthesis; UDP-N-acetyl-alpha-D-glucosamine biosynthesis; N-acetyl-alpha-D-glucosamine 1-phosphate from alpha-D-glucosamine 6-phosphate (route II): step 2/2. It functions in the pathway nucleotide-sugar biosynthesis; UDP-N-acetyl-alpha-D-glucosamine biosynthesis; UDP-N-acetyl-alpha-D-glucosamine from N-acetyl-alpha-D-glucosamine 1-phosphate: step 1/1. The protein operates within bacterial outer membrane biogenesis; LPS lipid A biosynthesis. Catalyzes the last two sequential reactions in the de novo biosynthetic pathway for UDP-N-acetylglucosamine (UDP-GlcNAc). The C-terminal domain catalyzes the transfer of acetyl group from acetyl coenzyme A to glucosamine-1-phosphate (GlcN-1-P) to produce N-acetylglucosamine-1-phosphate (GlcNAc-1-P), which is converted into UDP-GlcNAc by the transfer of uridine 5-monophosphate (from uridine 5-triphosphate), a reaction catalyzed by the N-terminal domain. This is Bifunctional protein GlmU from Pseudarthrobacter chlorophenolicus (strain ATCC 700700 / DSM 12829 / CIP 107037 / JCM 12360 / KCTC 9906 / NCIMB 13794 / A6) (Arthrobacter chlorophenolicus).